The primary structure comprises 261 residues: Aquaporin-8 (261 aa).

The Cytoplasmic portion of the chain corresponds to 1-36 (MSGEQTPMCSMDLPEVKVKTSMAGRCRVFWYEQYVQ). The chain crosses the membrane as a helical span at residues 37–57 (PCIVELVGSALFIFIGCLSVI). Cysteine persulfide is present on C53. A Cysteine sulfenic acid (-SOH) modification is found at C53. At 58–84 (ENSPNTGLLQPALAHGLALGLIIATLG) the chain is on the extracellular side. The chain crosses the membrane as a helical span at residues 85–105 (NISGGHFNPAVSLAVTVIGGL). The NPA 1 signature appears at 92–94 (NPA). At 106-107 (KT) the chain is on the cytoplasmic side. A helical transmembrane segment spans residues 108-128 (MLLIPYWISQLFGGLIGAALA). At 129 to 156 (KVVSPEERFWNASGAAFAIVQEQEQVAE) the chain is on the extracellular side. An N-linked (GlcNAc...) asparagine glycan is attached at N139. A helical membrane pass occupies residues 157–177 (ALGIEIILTMLLVLAVCMGAV). At 178-183 (NEKTMG) the chain is on the cytoplasmic side. A helical transmembrane segment spans residues 184–204 (PLAPFSIGFSVIVDILAGGSI). The Extracellular segment spans residues 205-228 (SGACMNPARAFGPAVMAGYWDFHW). An NPA 2 motif is present at residues 210 to 212 (NPA). Residues 229–249 (IYWLGPLLAGLFVGLLIRLLI) traverse the membrane as a helical segment. Over 250–261 (GDEKTRLILKSR) the chain is Cytoplasmic.

This sequence belongs to the MIP/aquaporin (TC 1.A.8) family. Sulfenylation at Cys-53(C53-SOH) when hydrogen peroxide flows through the AQP8 channel, making it susceptible to hydrogen sulfide produced by CBS. Post-translationally, persulfidation at Cys-53 is required to gate AQP8 channel; under stress condition, hydrogen peroxide accumulates in the cell leading to CBS activation that produces hydrogen sulfide inducing persulfidation of oxidized Cys-53 (C53-SOH). In terms of processing, N-glycosylated. In terms of tissue distribution, expressed in placenta. Highly expressed in the epithelial layer of gall-bladders. Expressed in heart, kidney, submandibular gland, liver, small intestine, colon, testes, and epididymis. In testes, expressed in spermatogenic cells.

The protein resides in the cell membrane. Its subcellular location is the mitochondrion inner membrane. It is found in the apical cell membrane. It localises to the basolateral cell membrane. The protein localises to the smooth endoplasmic reticulum membrane. The catalysed reaction is H2O(in) = H2O(out). It catalyses the reaction urea(in) = urea(out). The enzyme catalyses NH4(+)(in) = NH4(+)(out). It carries out the reaction H2O2(out) = H2O2(in). The catalysed reaction is formamide(out) = formamide(in). It catalyses the reaction methylamine(out) = methylamine(in). Reversibly gated by a two-step sulfenylation-persulfidation process in cells undergoing diverse stresses. In terms of biological role, channel that allows the facilitated permeation of water and uncharged molecules, such as hydrogen peroxide and the neutral form of ammonia (NH3), through cellular membranes such as plasma membrane, inner mitochondrial membrane and endoplasmic reticulum membrane of several tissues. The transport of ammonia neutral form induces a parallel transport of proton, at alkaline pH when the concentration of ammonia is high. However, it is unclear whether the transport of proton takes place via the aquaporin or via an endogenous pathway. Also, may transport ammonia analogs such as formamide and methylamine, a transport favourited at basic pH due to the increase of unprotonated (neutral) form, which is expected to favor diffusion. In vitro, may be also permeable to urea but not to glycerol. Does not transport urea or glycerol. The water transport mechanism is mercury- and copper-sensitive and passive in response to osmotic driving forces. At the canicular plasma membrane, mediates the osmotic transport of water toward the bile canaliculus and facilitates the cAMP-induced bile canalicular water secretion, a process involved in bile formation. In addition, mediates the hydrogen peroxide release from hepatocyte mitochondria that modulates the SREBF2-mediated cholesterol synthesis and facilitates the mitochondrial ammonia uptake which is metabolized into urea, mainly under glucagon stimulation. In B cells, transports the CYBB-generated hydrogen peroxide from the external leaflet of the plasma membrane to the cytosol to promote B cell activation and differentiation for signal amplification. In the small intestine and colon system, mediates water transport through mitochondria and apical membrane of epithelial cells. May play an important role in the adaptive response of proximal tubule cells to acidosis possibly facilitating mitochondrial ammonia transport. In Mus musculus (Mouse), this protein is Aquaporin-8.